We begin with the raw amino-acid sequence, 462 residues long: Peroxisomal membrane protein PEX31 (462 aa).

Positions 1–19 are enriched in polar residues; it reads MSEINNENLEPTSSTVAES. The segment at 1–26 is disordered; it reads MSEINNENLEPTSSTVAESTESKNKH. Residues 1–90 lie on the Cytoplasmic side of the membrane; sequence MSEINNENLE…LSIITWSNDN (90 aa). The chain crosses the membrane as a helical span at residues 91-111; the sequence is VSANLLGIFLFTVCVLYFGFI. The Peroxisomal portion of the chain corresponds to 112-175; the sequence is TRYFGHLMIV…TILSAQDVRR (64 aa). A helical transmembrane segment spans residues 176–196; the sequence is LLFTIAFLSPVYIFLTVFVLS. Residues 197 to 462 lie on the Cytoplasmic side of the membrane; that stretch reads PNYLMLIGGL…ISDVSMSPSL (266 aa). The disordered stretch occupies residues 406-425; the sequence is PTVEKATPNSHALKSEENNR. A Phosphoserine modification is found at Ser-432. Thr-435 is subject to Phosphothreonine.

The protein belongs to the PEX28-32 family. PEX30/31 subfamily.

Its subcellular location is the peroxisome membrane. In Saccharomyces cerevisiae (strain ATCC 204508 / S288c) (Baker's yeast), this protein is Peroxisomal membrane protein PEX31 (PEX31).